Here is a 146-residue protein sequence, read N- to C-terminus: Phospho-2-dehydro-3-deoxyheptonate aldolase (146 aa).

Belongs to the class-II DAHP synthase family. Homodimer.

The catalysed reaction is D-erythrose 4-phosphate + phosphoenolpyruvate + H2O = 7-phospho-2-dehydro-3-deoxy-D-arabino-heptonate + phosphate. It functions in the pathway metabolic intermediate biosynthesis; chorismate biosynthesis; chorismate from D-erythrose 4-phosphate and phosphoenolpyruvate: step 1/7. The protein is Phospho-2-dehydro-3-deoxyheptonate aldolase of Streptomyces lividans.